Consider the following 741-residue polypeptide: Hemolysin (741 aa).

Residues 1 to 25 form the signal peptide; it reads MPKLNRCAIAIFTILSAISSPTLLA. A propeptide spanning residues 26 to 157 is cleaved from the precursor; sequence NINEPSGEAA…RSGFASPAPA (132 aa). Cystine bridges form between C182-C200, C497-C511, and C537-C549. The Ricin B-type lectin domain occupies 484 to 575; sequence RPVNLQLASF…LTNVYSGESL (92 aa). Residues 607–741 are beta-prism domain; sequence NAQESSPILG…LVKGVQFDLN (135 aa).

It belongs to the HlyA hemolysin family. In terms of assembly, monomer. Homoheptamer. After binding to target membranes the protein assembles into a heptameric pre-pore complex. Proteolytic cleavage triggers a conformation change that is required for membrane insertion and pore formation. Post-translationally, proteolytical cleavage is required to convert the 80 kDa hemolysin precursor into the active 65 kDa hemolysin.

The protein localises to the secreted. It localises to the host cell membrane. Its function is as follows. Bacterial hemolysin that causes cytolysis by forming heptameric pores in target host membranes. This Vibrio cholerae serotype O1 (strain ATCC 39315 / El Tor Inaba N16961) protein is Hemolysin (hlyA).